Consider the following 257-residue polypeptide: Imidazole glycerol phosphate synthase subunit HisF (257 aa).

Residues aspartate 11 and aspartate 130 contribute to the active site.

This sequence belongs to the HisA/HisF family. In terms of assembly, heterodimer of HisH and HisF.

The protein resides in the cytoplasm. The catalysed reaction is 5-[(5-phospho-1-deoxy-D-ribulos-1-ylimino)methylamino]-1-(5-phospho-beta-D-ribosyl)imidazole-4-carboxamide + L-glutamine = D-erythro-1-(imidazol-4-yl)glycerol 3-phosphate + 5-amino-1-(5-phospho-beta-D-ribosyl)imidazole-4-carboxamide + L-glutamate + H(+). The protein operates within amino-acid biosynthesis; L-histidine biosynthesis; L-histidine from 5-phospho-alpha-D-ribose 1-diphosphate: step 5/9. Its function is as follows. IGPS catalyzes the conversion of PRFAR and glutamine to IGP, AICAR and glutamate. The HisF subunit catalyzes the cyclization activity that produces IGP and AICAR from PRFAR using the ammonia provided by the HisH subunit. This is Imidazole glycerol phosphate synthase subunit HisF from Trichormus variabilis (strain ATCC 29413 / PCC 7937) (Anabaena variabilis).